A 357-amino-acid chain; its full sequence is Metacaspase-3 (357 aa).

The active site involves H168. Ca(2+) contacts are provided by D183, D199, and D200. Residue C223 is part of the active site. D230 provides a ligand contact to Ca(2+).

It belongs to the peptidase C14B family.

The protein resides in the recycling endosome. With respect to regulation, activated by Ca(2+). Its function is as follows. Cysteine protease that cleaves specifically after arginine or lysine residues. In the bloodstream form, may cleave inactive metacaspase-4 MCA4 prior to MCA4 secretion. The polypeptide is Metacaspase-3 (Trypanosoma brucei brucei).